The following is a 261-amino-acid chain: Small ribosomal subunit protein uS3 (261 aa).

One can recognise a KH type-2 domain in the interval 39–107 (VREYLKRKLA…PVHVSIEEIR (69 aa)). A disordered region spans residues 213–261 (QPVAEEPAADDRRPRRTPGRPDGDKPRTRTVKKVDGAADPAKRVRKAGA). Residues 221-254 (ADDRRPRRTPGRPDGDKPRTRTVKKVDGAADPAK) show a composition bias toward basic and acidic residues.

Belongs to the universal ribosomal protein uS3 family. As to quaternary structure, part of the 30S ribosomal subunit. Forms a tight complex with proteins S10 and S14.

Functionally, binds the lower part of the 30S subunit head. Binds mRNA in the 70S ribosome, positioning it for translation. The polypeptide is Small ribosomal subunit protein uS3 (Dechloromonas aromatica (strain RCB)).